The primary structure comprises 175 residues: CDP-archaeol synthase (175 aa).

Helical transmembrane passes span 41 to 61 (GLFSGIFCGFLAGCIEIWLSM), 78 to 98 (YASALIVVLALPSGALFGDMF), 122 to 142 (FVVGAWFFTYLAAPEWFVSNF), and 150 to 170 (VLIMTPLLHLTTNIIGYFIGV).

This sequence belongs to the CDP-archaeol synthase family. It depends on Mg(2+) as a cofactor.

The protein resides in the cell membrane. The catalysed reaction is 2,3-bis-O-(geranylgeranyl)-sn-glycerol 1-phosphate + CTP + H(+) = CDP-2,3-bis-O-(geranylgeranyl)-sn-glycerol + diphosphate. It functions in the pathway membrane lipid metabolism; glycerophospholipid metabolism. In terms of biological role, catalyzes the formation of CDP-2,3-bis-(O-geranylgeranyl)-sn-glycerol (CDP-archaeol) from 2,3-bis-(O-geranylgeranyl)-sn-glycerol 1-phosphate (DGGGP) and CTP. This reaction is the third ether-bond-formation step in the biosynthesis of archaeal membrane lipids. This is CDP-archaeol synthase from Methanosarcina acetivorans (strain ATCC 35395 / DSM 2834 / JCM 12185 / C2A).